The following is a 40-amino-acid chain: Auxin-responsive endogenous peptide 1 (40 aa).

The chain crosses the membrane as a helical span at residues 7 to 29; it reads LIYRLVVRCFLDYSICAPFYFYH.

As to expression, expressed in cotyledons, hypocotyls, roots, newly developing leaves and shoot apical meristem. Not detected in flowers, siliques or mature leaves.

It is found in the cytoplasm. The protein resides in the nucleus. Its subcellular location is the membrane. Functionally, negative regulator of the auxin response. The sequence is that of Auxin-responsive endogenous peptide 1 from Arabidopsis thaliana (Mouse-ear cress).